The primary structure comprises 341 residues: Anthranilate phosphoribosyltransferase (341 aa).

5-phospho-alpha-D-ribose 1-diphosphate is bound by residues Gly79, Gly82–Asp83, Thr87, Asn89–Thr92, Lys107–Ser115, and Ser119. Gly79 is an anthranilate binding site. Ser91 contacts Mg(2+). Asn110 contributes to the anthranilate binding site. Arg165 contributes to the anthranilate binding site. Asp224 and Glu225 together coordinate Mg(2+).

This sequence belongs to the anthranilate phosphoribosyltransferase family. Homodimer. It depends on Mg(2+) as a cofactor.

It catalyses the reaction N-(5-phospho-beta-D-ribosyl)anthranilate + diphosphate = 5-phospho-alpha-D-ribose 1-diphosphate + anthranilate. The protein operates within amino-acid biosynthesis; L-tryptophan biosynthesis; L-tryptophan from chorismate: step 2/5. Catalyzes the transfer of the phosphoribosyl group of 5-phosphorylribose-1-pyrophosphate (PRPP) to anthranilate to yield N-(5'-phosphoribosyl)-anthranilate (PRA). The protein is Anthranilate phosphoribosyltransferase of Bacillus cereus (strain G9842).